The following is a 2179-amino-acid chain: Axotactin (2179 aa).

An N-terminal signal peptide occupies residues 1–18 (MAFPYIWALLPLICSASG). Residues 19 to 1816 (LSLPNMTSTD…DENKQEDSTQ (1798 aa)) are Extracellular-facing. 2 N-linked (GlcNAc...) asparagine glycosylation sites follow: N23 and N52. A disordered region spans residues 59 to 107 (GGLAGSSTGGQSLPDTGGGNSAGGSPAGGSSGTGGGGSNSGISGNNSAM). Gly residues predominate over residues 74–97 (TGGGNSAGGSPAGGSSGTGGGGSN). The N-linked (GlcNAc...) asparagine glycan is linked to N103. The 52-residue stretch at 119 to 170 (CAGPGDPGPCKQYIYKWRYEPTTNECTNFIWGGCEGNPQNRFGTEAECLFHC) folds into the BPTI/Kunitz inhibitor domain. Disulfide bonds link C119–C170, C128–C152, and C144–C166. Residues 201–220 (YTQSPAQSPDGMGGAEGGDG) are disordered. Gly residues predominate over residues 211 to 220 (GMGGAEGGDG). One can recognise a Laminin G-like 1 domain in the interval 242–438 (KTFIFAKNNT…TKHENVNEGC (197 aa)). The N-linked (GlcNAc...) asparagine glycan is linked to N249. Intrachain disulfides connect C405–C438, C442–C455, C449–C464, and C466–C476. Positions 439 to 477 (SDMCESRHNLCFVGSRCINHYGGISCDCFGTHYEGEHCD) constitute an EGF-like 1 domain. Laminin G-like domains are found at residues 481–664 (ATII…AEFV) and 660–839 (EAEF…LDNC). Residues N542, N571, and N741 are each glycosylated (N-linked (GlcNAc...) asparagine). 4 cysteine pairs are disulfide-bonded: C808–C839, C845–C857, C851–C866, and C868–C878. The EGF-like 2 domain maps to 841-879 (YIDPCKRPNTCEHGGKCFVKDDRVTCDCKHTGYIGKNCH). N925, N1000, N1019, and N1026 each carry an N-linked (GlcNAc...) asparagine glycan. The Laminin G-like 4 domain maps to 1087-1259 (YVVTFTTSQS…VHLSEIIKDC (173 aa)). 4 disulfides stabilise this stretch: C1231/C1259, C1263/C1274, C1268/C1283, and C1285/C1296. Residues 1260-1297 (KPSCVPSPCRNGAQCKELWSSFKCVCNNPWAHIGEFCE) enclose the EGF-like 3 domain. The 211-residue stretch at 1316-1526 (RNYLSVGATP…PTQEGVLPNC (211 aa)) folds into the Laminin G-like 5 domain. N1393 is a glycosylation site (N-linked (GlcNAc...) asparagine). 4 disulfides stabilise this stretch: C1494–C1526, C1530–C1541, C1535–C1552, and C1554–C1564. One can recognise an EGF-like 4 domain in the interval 1527 to 1565 (QIKCDAEPCKNGGTCQEHFAEQLSTCDCEHTSFLGEFCS). The Laminin G-like 6 domain maps to 1569 to 1765 (GADFSGESTL…NPQGVRSAQC (197 aa)). N1667, N1707, N1751, and N1782 each carry an N-linked (GlcNAc...) asparagine glycan. A disulfide bridge connects residues C1722 and C1765. Residues 1817-1837 (VVFLTLTSVFVIIVICCLLEV) traverse the membrane as a helical segment. Over 1838-2179 (YRSHLAYKKR…TSIDSILSLD (342 aa)) the chain is Cytoplasmic. Disordered regions lie at residues 1891–2141 (YTYK…PTLF) and 2156–2179 (SYLGGPRLQPRSNRTSIDSILSLD). Residues 1916-1930 (GSATPSQPGTPTALS) are compositionally biased toward polar residues. The span at 1940 to 1949 (EEEEEEEDEA) shows a compositional bias: acidic residues. The span at 1954-1966 (AAEKSGENEEPPA) shows a compositional bias: basic and acidic residues. Polar residues-rich tracts occupy residues 1969-1981 (TTASEIKESQAQP) and 2010-2025 (EPSSQLNSAQNGQLAQ). Positions 2064–2079 (PQEHKSRHKATDDTEA) are enriched in basic and acidic residues. The span at 2082–2091 (QQQQQQQQQQ) shows a compositional bias: low complexity. Polar residues-rich tracts occupy residues 2092-2105 (SFDVATNANGSSLP) and 2165-2179 (PRSNRTSIDSILSLD).

The protein localises to the cell projection. Its subcellular location is the axon. It is found in the membrane. May have serine protease inhibitor activity. Might play a role in the glial-neuronal signaling pathway that is important in establishing the electrical properties of axonal membranes. This is Axotactin from Drosophila melanogaster (Fruit fly).